The primary structure comprises 476 residues: Stromelysin-2 (476 aa).

Positions 1 to 17 are cleaved as a signal peptide; it reads MEPLAILALLSLPICSA. The propeptide at 18 to 99 is activation peptide; the sequence is YPLHGAVTQG…PRCGVPDVGG (82 aa). The Cysteine switch signature appears at 90 to 97; the sequence is PRCGVPDV. Residues C92, H168, D170, H183, H196, and H218 each coordinate Zn(2+). Residue E219 is part of the active site. Residues H222 and H228 each coordinate Zn(2+). Hemopexin repeat units lie at residues 286 to 335, 336 to 382, 384 to 432, and 433 to 476; these read PDKC…WPTL, PSDL…GFPP, VKKI…FPGI, and EPQV…WLLC. Cysteines 289 and 476 form a disulfide.

This sequence belongs to the peptidase M10A family. Zn(2+) serves as cofactor. Requires Ca(2+) as cofactor. Expressed in small intestine. Weak levels in heart and lung.

The protein resides in the secreted. It localises to the extracellular space. Its subcellular location is the extracellular matrix. It catalyses the reaction Similar to stromelysin 1, but action on collagen types III, IV and V is weak.. Functionally, can degrade fibronectin, gelatins of type I, III, IV, and V; weakly collagens III, IV, and V. Activates procollagenase. The sequence is that of Stromelysin-2 (Mmp10) from Mus musculus (Mouse).